A 116-amino-acid polypeptide reads, in one-letter code: Putative iron-sulfur cluster insertion protein ErpA (116 aa).

Iron-sulfur cluster-binding residues include C44, C108, and C110.

Belongs to the HesB/IscA family. As to quaternary structure, homodimer. Requires iron-sulfur cluster as cofactor.

In terms of biological role, required for insertion of 4Fe-4S clusters. The polypeptide is Putative iron-sulfur cluster insertion protein ErpA (Dechloromonas aromatica (strain RCB)).